A 522-amino-acid chain; its full sequence is MQEELAWETDGLLPLERQLHEAARQNNVGRMQELIGRRVNTRARNHVGRVALHWAAGAGHEQAVRLLLEHEAAVDEEDAVGALTEARLCFGMNALLLSAWFGHLRILQILVNSGAKIHCESKDGLTLLHCAAQKGHVPVLAFIMEDLEDVALDHVDKLGRTAFHRAAEHGQLDALDFLVGSGCDHNVKDKEGNTALHLAAGRGHMAVLQRLVDIGLDLEEQNAEGLTALHSAAGGSHPDCVQLLLRAGSTVNALTQKNLSCLHYAALSGSEDVSRVLIHAGGCANVVDHQGASPLHLAVRHNFPALVRLLINSDSDVNAVDNRQQTPLHLAAEHAWQDIADMLLIAGVDLNLRDKQGKTALAVAVRSNHVSLVDMIIKADRFYRWEKDHPSDPSGKSLSFKQDHRQETQQLRSVLWRLASRYLQPREWKKLAYSWEFTEAHVDAIEQQWTGTRSYQEHGHRMLLIWLHGVATAGENPSKALFEGLVAIGRRDLAGWSTMARSQLTATSASRVQMILVPQPPE.

ANK repeat units follow at residues 14–43, 47–76, 90–119, 123–152, 158–187, 191–220, 224–253, 257–286, 290–319, 323–352, and 356–385; these read PLER…NTRA, VGRV…AVDE, FGMN…KIHC, DGLT…DVAL, LGRT…DHNV, EGNT…DLEE, EGLT…TVNA, KNLS…CANV, QGAS…DVNA, RQQT…DLNL, and QGKT…FYRW. Residues 413-501 enclose the Death domain; that stretch reads SVLWRLASRY…DLAGWSTMAR (89 aa).

This chain is Ankyrin repeat and death domain-containing protein 1A (ANKDD1A), found in Homo sapiens (Human).